The chain runs to 404 residues: Spore development regulator RYP2 (404 aa).

Disordered stretches follow at residues 1–46 (MSAP…RKAV), 200–231 (LLKR…SSQQ), and 382–404 (SGQS…PAWG). One can recognise a Velvet domain in the interval 17–194 (LQSADFRLTV…ADQGVKLRIR (178 aa)). Residues 29–46 (NPERARVAGGKEKERKAV) are compositionally biased toward basic and acidic residues. A compositionally biased stretch (polar residues) spans 382 to 397 (SGQSFSQSAGHMQSPS).

The protein belongs to the velvet family. VosA subfamily. Forms a heterodimeric complex with RYP3; the formation of the RYP2-RYP3 complex is light-dependent.

Its subcellular location is the nucleus. In terms of biological role, component of the RYP2-RYP3 heterodimeric complex that plays a dual role in activating genes associated with spore maturation and repressing certain development-associated genes. The complex binds DNA through the DNA-binding domain of vosA that recognizes an 11-nucleotide consensus sequence 5'-CTGGCCGCGGC-3' consisting of two motifs in the promoters of key developmental regulatory genes. Required for viable spore production and regulation of sporulation in response to temperature and for the switch to yeast-form in the presence of host cells. In Ajellomyces capsulatus (Darling's disease fungus), this protein is Spore development regulator RYP2.